We begin with the raw amino-acid sequence, 296 residues long: Protoheme IX farnesyltransferase 1 (296 aa).

The next 8 membrane-spanning stretches (helical) occupy residues 14–34 (IVLLLVITAVTTMYAGDALSA), 41–61 (LWDYAHLMAAGALASAGSSAL), 86–106 (IGENIVLAYGLAISSAAVVYA), 108–128 (FLLNAPTAFFIALGIFSYVII), 141–161 (IVIGGIAGSAASWAGWTAATG), 165–185 (LLGFLIGFLVFVWTPSHFWCL), 230–250 (AFGMGLVYLVIAVASGGLMLV), and 274–294 (YLTIIFAAVALDAAFHYPFPF).

This sequence belongs to the UbiA prenyltransferase family. Protoheme IX farnesyltransferase subfamily.

Its subcellular location is the cell membrane. The enzyme catalyses heme b + (2E,6E)-farnesyl diphosphate + H2O = Fe(II)-heme o + diphosphate. It participates in porphyrin-containing compound metabolism; heme O biosynthesis; heme O from protoheme: step 1/1. Its function is as follows. Converts heme B (protoheme IX) to heme O by substitution of the vinyl group on carbon 2 of heme B porphyrin ring with a hydroxyethyl farnesyl side group. The sequence is that of Protoheme IX farnesyltransferase 1 from Cenarchaeum symbiosum (strain A).